We begin with the raw amino-acid sequence, 1029 residues long: MASEAVKVVVRCRPMNQRERELRCQPVVTVDCARAQCCIQNPGAADEPPKQFTFDGAYHVDHVTEQIYNEIAYPLVEGVTEGYNGTIFAYGQTGSGKSFTMQGLPDPPSQRGIIPRAFEHVFESVQCAENTKFLVRASYLEIYNEDVRDLLGADTKQKLELKEHPEKGVYVKGLSMHTVHSVAQCEHIMETGWKNRSVGYTLMNKDSSRSHSIFTISIEMSAVDERGKDHLRAGKLNLVDLAGSERQSKTGATGERLKEATKINLSLSALGNVISALVDGRCKHVPYRDSKLTRLLQDSLGGNTKTLMVACLSPADNNYDETLSTLRYANRAKNIRNKPRINEDPKDALLREYQEEIKKLKAILTQQMSPSSLSALLSRQVPPDPVQVEEKLLPQPVIQHDVEAEKQLIREEYEERLARLKADYKAEQESRARLEEDITAMRNSYDVRLSTLEENLRKETEAVLQVGVLYKAEVMSRAEFASSAEYPPAFQYETVVKPKVFSTTDTLPSDDVSKTQVSSRFAELPKVEPSKSEISLGSSESSSLEETSVSEAFPGPEEPSNVEVSMPTEESRSRYFLDECLGQEAAGHLLGEQNYLPQEEPQEVPLQGLLGLQDPFAEVEAKLARLSSTVARTDAPQADVPKVPVQVPAPTDLLEPSDARPEAEAADDFPPRPEVDLASEVALEVVRTAEPGVWLEAQAPVALVAQPEPLPATAGVKRESVGMEVAVLTDDPLPVVDQQQVLARLQLLEQQVVGGEQAKNKDLKEKHKRRKRYADERRKQLVAALQNSDEDSGDWVLLNVYDSIQEEVRAKSKLLEKMQRKLRAAEVEIKDLQSEFQLEKIDYLATIRRQERDSMLLQQLLEQVQPLIRRDCNYSNLEKILRESCWDEDNGFWKIPHPVITKTSLPVAVSTGPQNKPARKTSAADNGEPNMEDDRYRLMLSRSNSENIASNYFRSKRASQILSTDARKSLTHHNSPPGLSCPLSNNSAIPPTQAPEMPQPRPFRLESLDIPFTKAKRKKSKSNFGSEPL.

Residues 5-335 (AVKVVVRCRP…LRYANRAKNI (331 aa)) enclose the Kinesin motor domain. Residue 91–98 (GQTGSGKS) participates in ATP binding. A coiled-coil region spans residues 346–462 (KDALLREYQE…EENLRKETEA (117 aa)). Disordered stretches follow at residues 523-569 (ELPK…MPTE) and 647-673 (VPAP…PPRP). Positions 532 to 551 (SEISLGSSESSSLEETSVSE) are enriched in low complexity. The span at 657 to 673 (SDARPEAEAADDFPPRP) shows a compositional bias: basic and acidic residues. A coiled-coil region spans residues 739–846 (QQVLARLQLL…QLEKIDYLAT (108 aa)). Disordered stretches follow at residues 908–931 (AVST…EPNM) and 968–1029 (KSLT…SEPL).

The protein belongs to the TRAFAC class myosin-kinesin ATPase superfamily. Kinesin family. Homodimer. Interacts with APBA1 (via PDZ domain); the interaction is direct and is required for association of KIF17 with the cargo that is to be transported. Interacts with IFT B complex components IFT52 and IFT57. Interacts with IFT70B. Interacts with PIWIL1. Interacts with TBATA.

The protein localises to the cytoplasm. The protein resides in the cytoskeleton. It is found in the cell projection. It localises to the cilium. Its subcellular location is the dendrite. Its function is as follows. Dendrite-specific motor protein which, in association with the Apba1-containing complex (LIN-10-LIN-2-LIN-7 complex), transports vesicles containing N-methyl-D-aspartate (NMDA) receptor subunit NR2B along microtubules. This chain is Kinesin-like protein KIF17 (KIF17), found in Homo sapiens (Human).